The primary structure comprises 157 residues: MKILVIHGPNLNMLGRREPEVYGSVTLDEINAILQERAAAVGVTLLTVQSNHEGALIDFLQAEGWDADGIIINPGALTHYGLALRDALAMLKAPIIEVHLSNVYRREPFRHTSVIAPVATGQIAGLGWRGYLLAIEWLLGTRGQGPGTRDQALGTRD.

The active-site Proton acceptor is tyrosine 22. Residues asparagine 73, histidine 79, and aspartate 86 each contribute to the substrate site. Catalysis depends on histidine 99, which acts as the Proton donor. Substrate contacts are provided by residues 100 to 101 (LS) and arginine 110.

The protein belongs to the type-II 3-dehydroquinase family. As to quaternary structure, homododecamer.

The catalysed reaction is 3-dehydroquinate = 3-dehydroshikimate + H2O. Its pathway is metabolic intermediate biosynthesis; chorismate biosynthesis; chorismate from D-erythrose 4-phosphate and phosphoenolpyruvate: step 3/7. Catalyzes a trans-dehydration via an enolate intermediate. This is 3-dehydroquinate dehydratase from Roseiflexus castenholzii (strain DSM 13941 / HLO8).